A 339-amino-acid polypeptide reads, in one-letter code: Dual specificity protein phosphatase 12 (339 aa).

M1 bears the N-acetylmethionine mark. A compositionally biased stretch (polar residues) spans 1–22 (MLEVQSSNHGCERQAPTTSPAS). The tract at residues 1–25 (MLEVQSSNHGCERQAPTTSPASSAG) is disordered. The 145-residue stretch at 26-170 (HAVEVRPGLY…LKLYEAMGHE (145 aa)) folds into the Tyrosine-protein phosphatase domain. The Phosphocysteine intermediate role is filled by C114. 115–120 (HAGVSR) contacts substrate. S334 carries the post-translational modification Phosphoserine.

This sequence belongs to the protein-tyrosine phosphatase family. Non-receptor class dual specificity subfamily. As to quaternary structure, monomer. Requires Zn(2+) as cofactor.

It is found in the nucleus. Its subcellular location is the cytoplasm. The protein resides in the cytosol. The enzyme catalyses O-phospho-L-tyrosyl-[protein] + H2O = L-tyrosyl-[protein] + phosphate. It catalyses the reaction O-phospho-L-seryl-[protein] + H2O = L-seryl-[protein] + phosphate. The catalysed reaction is O-phospho-L-threonyl-[protein] + H2O = L-threonyl-[protein] + phosphate. In terms of biological role, dual specificity phosphatase; can dephosphorylate both phosphotyrosine and phosphoserine or phosphothreonine residues. Can dephosphorylate glucokinase (in vitro). Has phosphatase activity with the synthetic substrate 6,8-difluoro-4-methylumbelliferyl phosphate and other in vitro substrates. The polypeptide is Dual specificity protein phosphatase 12 (Dusp12) (Rattus norvegicus (Rat)).